The following is a 131-amino-acid chain: Holin-like protein CidA (131 aa).

4 helical membrane passes run 4 to 24, 30 to 50, 65 to 85, and 88 to 108; these read VQLI…TYIG, IFHL…LLLQ, FLLK…MDVA, and ITLN…IVAL.

The protein belongs to the CidA/LrgA family. CidA subfamily.

It is found in the cell membrane. In terms of biological role, increases the activity of extracellular murein hydrolases possibly by mediating their export via hole formation. Inhibited by the antiholin-like proteins LrgAB. In an unstressed cell, the LrgAB products probably inhibit the function of the CidAB proteins. When a cell is stressed by the addition of antibiotics or by other factors in the environment, the CidAB proteins possibly oligomerize within the bacterial cell membrane, creating lesions that disrupt the proton motive force, which in turn results in loss of cell viability. These lesions are also hypothesized to regulate the subsequent cell lysis by either allowing the murein hydrolases access to the cell wall substrate and/or regulating their activity by a possible change in the cell wall pH that results from loss of membrane potential. The protein is Holin-like protein CidA of Staphylococcus aureus (strain Mu3 / ATCC 700698).